Here is a 544-residue protein sequence, read N- to C-terminus: Membrane protein insertase YidC (544 aa).

The helical transmembrane segment at 6–26 (NLLLIALLFVTFMLWQAWETD) threads the bilayer. Residues 112–132 (SGLTGKNGPDNPANGPRPLFT) are disordered. The next 4 membrane-spanning stretches (helical) occupy residues 343–363 (KFLH…TFIV), 418–438 (LGGC…YYML), 456–476 (LSAQ…MFFI), and 497–517 (PVIF…YYIV).

This sequence belongs to the OXA1/ALB3/YidC family. Type 1 subfamily. In terms of assembly, interacts with the Sec translocase complex via SecD. Specifically interacts with transmembrane segments of nascent integral membrane proteins during membrane integration.

The protein resides in the cell inner membrane. In terms of biological role, required for the insertion and/or proper folding and/or complex formation of integral membrane proteins into the membrane. Involved in integration of membrane proteins that insert both dependently and independently of the Sec translocase complex, as well as at least some lipoproteins. Aids folding of multispanning membrane proteins. This Pectobacterium carotovorum subsp. carotovorum (strain PC1) protein is Membrane protein insertase YidC.